The following is a 137-amino-acid chain: Chaperone protein YscB (137 aa).

In terms of assembly, interacts with SycN to form a complex which specifically binds to YopN.

The protein localises to the cytoplasm. It is found in the cell inner membrane. Its function is as follows. Functions as a specific chaperone for YopN. It could facilitate the secretion and the subsequent translocation of YopN. In Yersinia enterocolitica serotype O:8 / biotype 1B (strain NCTC 13174 / 8081), this protein is Chaperone protein YscB (yscB).